The chain runs to 327 residues: Phenylalanine--tRNA ligase alpha subunit (327 aa).

Glu-252 contacts Mg(2+).

It belongs to the class-II aminoacyl-tRNA synthetase family. Phe-tRNA synthetase alpha subunit type 1 subfamily. Tetramer of two alpha and two beta subunits. It depends on Mg(2+) as a cofactor.

Its subcellular location is the cytoplasm. The enzyme catalyses tRNA(Phe) + L-phenylalanine + ATP = L-phenylalanyl-tRNA(Phe) + AMP + diphosphate + H(+). The protein is Phenylalanine--tRNA ligase alpha subunit of Salmonella choleraesuis (strain SC-B67).